The primary structure comprises 208 residues: ATP-dependent Clp protease proteolytic subunit (208 aa).

The active-site Nucleophile is serine 105. The active site involves histidine 130.

Belongs to the peptidase S14 family. Fourteen ClpP subunits assemble into 2 heptameric rings which stack back to back to give a disk-like structure with a central cavity, resembling the structure of eukaryotic proteasomes.

Its subcellular location is the cytoplasm. It catalyses the reaction Hydrolysis of proteins to small peptides in the presence of ATP and magnesium. alpha-casein is the usual test substrate. In the absence of ATP, only oligopeptides shorter than five residues are hydrolyzed (such as succinyl-Leu-Tyr-|-NHMec, and Leu-Tyr-Leu-|-Tyr-Trp, in which cleavage of the -Tyr-|-Leu- and -Tyr-|-Trp bonds also occurs).. Its function is as follows. Cleaves peptides in various proteins in a process that requires ATP hydrolysis. Has a chymotrypsin-like activity. Plays a major role in the degradation of misfolded proteins. The chain is ATP-dependent Clp protease proteolytic subunit from Xylella fastidiosa (strain 9a5c).